A 303-amino-acid polypeptide reads, in one-letter code: Phytochrome-associated serine/threonine-protein phosphatase 1 (303 aa).

D50, H52, D78, and N110 together coordinate Zn(2+). Catalysis depends on H111, which acts as the Proton donor. Residues H160 and H234 each contribute to the Zn(2+) site.

This sequence belongs to the PPP phosphatase family. PP-6 (PP-V) subfamily. Interacts with PHYA and PHYB, mostly when they are phosphorylated and in Pfr forms. Interacts with TAP46. Interacts with PIN1 and PIN2. Interacts with ABI5. Interacts with PIF3 and PIF4. Protein phosphatase 6 (PP6) holoenzyme is a heterotrimeric complex formed by the catalytic subunit FYPP, a SAPS domain-containing subunit (SAL) and a protein phosphatase 2A regulatory subunit A (PP2AA). Requires Zn(2+) as cofactor. In terms of tissue distribution, mostly expressed in flowers. Also detected to a lower extent in stems and leaves. Expressed in roots.

The protein resides in the cytoplasm. It catalyses the reaction O-phospho-L-seryl-[protein] + H2O = L-seryl-[protein] + phosphate. It carries out the reaction O-phospho-L-threonyl-[protein] + H2O = L-threonyl-[protein] + phosphate. Catalytic subunit of protein phosphatase 6 (PP6). Dephosphorylates phosphorylated phytochromes, with a preference toward Pfr forms. Plays a major role in the photoperiodic control of flowering time in long days by modulating phytochrome signals in flowering time control. Involved in the regulation of polar auxin transport in roots. Dephosphorylates directly the auxin efflux carriers PIN1 and PIN2, thus promoting their proper polar localization in root cell plasma membrane. Acts antagonistically with the protein kinase PID to regulate the reversible phosphorylation of PIN and polar targeting, subsequently impacting polar auxin transport and plant development. Involved in the regulation of abscisic acid (ABA) signaling during seed germination and postgermination seedling growth. Functions as a negative regulator of ABA signaling through direct dephosphorylation and destabilization of ABI5. Acts antagonistically with the protein kinase SRK2E/SNRK2.6 to regulate ABI5 phosphorylation and ABA responses. Involved in the regulation of phosphorylation status in hypocotyl phototropism. Involved in the negative regulation of photomorphogenesis by controlling the stability and transcriptional activity of PIF3 and PIF4 proteins in the dark, via the regulation of their phosphorylation status. The chain is Phytochrome-associated serine/threonine-protein phosphatase 1 from Arabidopsis thaliana (Mouse-ear cress).